A 281-amino-acid chain; its full sequence is Probable feruloyl esterase A (281 aa).

The signal sequence occupies residues 1–21 (MKQFSAKFALALSAAAGQALA). 3 disulfides stabilise this stretch: Cys-50–Cys-279, Cys-112–Cys-115, and Cys-248–Cys-255. Asp-98 contributes to the substrate binding site. Asn-100 carries N-linked (GlcNAc...) asparagine glycosylation. Tyr-101 serves as a coordination point for substrate. Ser-154 (nucleophile) is an active-site residue. A glycan (N-linked (GlcNAc...) asparagine) is linked at Asn-173. The Charge relay system role is filled by Asp-215. Residue His-268 coordinates substrate. His-268 acts as the Charge relay system in catalysis.

The protein belongs to the AB hydrolase superfamily. FaeA family.

It localises to the secreted. The enzyme catalyses feruloyl-polysaccharide + H2O = ferulate + polysaccharide.. Functionally, involved in degradation of plant cell walls. Hydrolyzes the feruloyl-arabinose ester bond in arabinoxylans, and the feruloyl-galactose ester bond in pectin. In Aspergillus terreus (strain NIH 2624 / FGSC A1156), this protein is Probable feruloyl esterase A (faeA).